Here is a 249-residue protein sequence, read N- to C-terminus: Probable cobalt-factor III C(17)-methyltransferase (249 aa).

The protein belongs to the precorrin methyltransferase family.

It carries out the reaction Co(II)-factor III + S-adenosyl-L-methionine + H(+) = Co(II)-factor IV + S-adenosyl-L-homocysteine. It functions in the pathway cofactor biosynthesis; adenosylcobalamin biosynthesis; cob(II)yrinate a,c-diamide from sirohydrochlorin (anaerobic route): step 3/10. In terms of biological role, methyltransferase that likely catalyzes the ring contraction and methylation of C-17 in cobalt-factor III to form cobalt-factor IV. May also convert cobalt-precorrin-3 to cobalt-precorrin-4. This Methanocaldococcus jannaschii (strain ATCC 43067 / DSM 2661 / JAL-1 / JCM 10045 / NBRC 100440) (Methanococcus jannaschii) protein is Probable cobalt-factor III C(17)-methyltransferase (cbiH).